We begin with the raw amino-acid sequence, 212 residues long: Thymidylate kinase (212 aa).

Position 10 to 17 (10 to 17 (GIDGCGKT)) interacts with ATP.

It belongs to the thymidylate kinase family.

It catalyses the reaction dTMP + ATP = dTDP + ADP. In terms of biological role, phosphorylation of dTMP to form dTDP in both de novo and salvage pathways of dTTP synthesis. The protein is Thymidylate kinase of Prochlorococcus marinus (strain AS9601).